We begin with the raw amino-acid sequence, 391 residues long: MMITKQSYQKFALMRVFVFSLSAFIFNTTEFVPVALLSDIAKSFEMESATVGLMITAYAWVVSLGSLPLMLLSAKIERKRLLLFLFALFILSHILSALAWNFWVLLLSRMGIAFAHSIFWSITASLVIRVAPRNKKQQALGLLALGSSLAMILGLPLGRIIGQILDWRSTFGVIGGVATLIALLMWKLLPHLPSRNAGTLASVPVLMKRPLLMGIYLLVIMVISGHFTTYSYIEPFIIQISQFSPDITTLMLFVFGLAGVVGSFLFGRLYAKNSRKFIAFAMVLVICPQLLLFVFKNLEWVVFLQIFLWGIGITSLGISLQMRVLQLAPDATDVASAIYSGSYNVGIGSGALFGSIVIHQLGLGYIGFVGGALGLLALFWLRFITIKFKKT.

The next 12 membrane-spanning stretches (helical) occupy residues 16-36 (VFVF…PVAL), 51-71 (VGLM…PLML), 82-102 (LLFL…AWNF), 110-130 (MGIA…VIRV), 138-158 (QALG…LPLG), 170-190 (TFGV…KLLP), 210-230 (PLLM…FTTY), 247-267 (ITTL…FLFG), 277-297 (FIAF…VFKN), 300-320 (WVVF…GISL), 338-358 (IYSG…SIVI), and 361-381 (LGLG…LFWL).

Belongs to the major facilitator superfamily. SotB (TC 2.A.1.2) family.

The protein localises to the cell inner membrane. Involved in the efflux of sugars. The physiological role may be the reduction of the intracellular concentration of toxic sugars or sugar metabolites. This chain is Probable sugar efflux transporter, found in Helicobacter pylori (strain ATCC 700392 / 26695) (Campylobacter pylori).